The following is a 193-amino-acid chain: Recombination protein RecR (193 aa).

The C4-type zinc finger occupies 61 to 76 (CSSCNALSESEVCEIC). In terms of domain architecture, Toprim spans 84–170 (SQLCMVLHPR…TFTKIAQGVP (87 aa)).

It belongs to the RecR family.

Its function is as follows. May play a role in DNA repair. It seems to be involved in an RecBC-independent recombinational process of DNA repair. It may act with RecF and RecO. The protein is Recombination protein RecR of Helicobacter pylori (strain G27).